Consider the following 257-residue polypeptide: Pantothenate synthetase (257 aa).

29 to 36 contacts ATP; it reads MGNLHAGH. The Proton donor role is filled by His-36. Gln-60 contributes to the (R)-pantoate binding site. Beta-alanine is bound at residue Gln-60. Residue 145-148 coordinates ATP; it reads GEKD. (R)-pantoate is bound at residue Gln-151. ATP contacts are provided by residues Val-174 and 182–185; that span reads LSSR.

The protein belongs to the pantothenate synthetase family. Homodimer.

It is found in the cytoplasm. The catalysed reaction is (R)-pantoate + beta-alanine + ATP = (R)-pantothenate + AMP + diphosphate + H(+). The protein operates within cofactor biosynthesis; (R)-pantothenate biosynthesis; (R)-pantothenate from (R)-pantoate and beta-alanine: step 1/1. In terms of biological role, catalyzes the condensation of pantoate with beta-alanine in an ATP-dependent reaction via a pantoyl-adenylate intermediate. This Coxiella burnetii (strain Dugway 5J108-111) protein is Pantothenate synthetase.